The chain runs to 353 residues: Probable D-xylulose reductase A (353 aa).

Residues Cys42, His67, and Glu68 each coordinate Zn(2+). 177–182 (GAGPVG) contacts NAD(+).

Belongs to the zinc-containing alcohol dehydrogenase family. Zn(2+) serves as cofactor.

It carries out the reaction xylitol + NAD(+) = D-xylulose + NADH + H(+). The protein operates within carbohydrate degradation; L-arabinose degradation via L-arabinitol; D-xylulose 5-phosphate from L-arabinose (fungal route): step 4/5. In terms of biological role, xylitol dehydrogenase which catalyzes the conversion of xylitol to D-xylulose. Xylose is a major component of hemicelluloses such as xylan. Most fungi utilize D-xylose via three enzymatic reactions, xylose reductase (XR), xylitol dehydrogenase (XDH), and xylulokinase, to form xylulose 5-phosphate, which enters pentose phosphate pathway. This chain is Probable D-xylulose reductase A (xdhA), found in Aspergillus terreus (strain NIH 2624 / FGSC A1156).